The sequence spans 282 residues: Pyrroline-5-carboxylate reductase (282 aa).

This sequence belongs to the pyrroline-5-carboxylate reductase family.

The enzyme catalyses L-proline + NADP(+) = (S)-1-pyrroline-5-carboxylate + NADPH + 2 H(+). The catalysed reaction is L-proline + NAD(+) = (S)-1-pyrroline-5-carboxylate + NADH + 2 H(+). It participates in amino-acid biosynthesis; L-proline biosynthesis; L-proline from L-glutamate 5-semialdehyde: step 1/1. The protein is Pyrroline-5-carboxylate reductase (pro3) of Schizosaccharomyces pombe (strain 972 / ATCC 24843) (Fission yeast).